The primary structure comprises 1419 residues: Myosin-2B (1419 aa).

One can recognise a Myosin N-terminal SH3-like domain in the interval 4 to 57 (EVGTRCWYPNSEAGWIGCEVTKNDFQDGTYHIELTSETGLVIPIETKHLESNNA). The region spanning 75–780 (EATHDLTTLS…VLAYLEKIRS (706 aa)) is the Myosin motor domain. 169-176 (GESGAGKT) contacts ATP. The actin-binding stretch occupies residues 451 to 531 (FIGVLDIYGF…LGILSLLDEE (81 aa)). IQ domains lie at 783–805 (VTEL…LYLQ), 806–830 (AMLS…DFEM), 831–854 (KTDA…VFET), 855–878 (LKNI…QREF), 879–901 (ESRS…RYQT), and 902–931 (LKTG…QAES). Residues 909 to 940 (IQALVRRKQSQEKLKQLKIQAESAASLKNSAA) adopt a coiled-coil conformation. Positions 1061 to 1419 (KDNERTSTSS…VIKELGSLLA (359 aa)) are non alpha-helical, tail domain. The region spanning 1143 to 1357 (HSILKQTVQD…LNHLSNTARR (215 aa)) is the Dilute domain.

Belongs to the TRAFAC class myosin-kinesin ATPase superfamily. Myosin family. Homodimer. Interacts with calmodulin (CMD1) and the myosin light chain MLC1 through its IQ repeats.

Its function is as follows. Myosin heavy chain that is required for the cell cycle-regulated transport of various organelles and proteins for their segregation. Functions by binding with its tail domain to receptor proteins on organelles and exerting force with its N-terminal motor domain against actin filaments, thereby transporting its cargo along polarized actin cables. The protein is Myosin-2B (MYO2B) of Naumovozyma castellii (Yeast).